Here is a 122-residue protein sequence, read N- to C-terminus: Large ribosomal subunit protein uL18 (122 aa).

The protein belongs to the universal ribosomal protein uL18 family. As to quaternary structure, part of the 50S ribosomal subunit; part of the 5S rRNA/L5/L18/L25 subcomplex. Contacts the 5S and 23S rRNAs.

Functionally, this is one of the proteins that bind and probably mediate the attachment of the 5S RNA into the large ribosomal subunit, where it forms part of the central protuberance. This chain is Large ribosomal subunit protein uL18, found in Acetivibrio thermocellus (strain ATCC 27405 / DSM 1237 / JCM 9322 / NBRC 103400 / NCIMB 10682 / NRRL B-4536 / VPI 7372) (Clostridium thermocellum).